Reading from the N-terminus, the 402-residue chain is Prostaglandin E2 receptor EP1 subtype (402 aa).

The Extracellular portion of the chain corresponds to 1 to 35 (MSPCGPLNLSLAGEATTCAAPWVPNTSAVPPSGAS). N8 and N25 each carry an N-linked (GlcNAc...) asparagine glycan. Residues 36–62 (PALPIFSMTLGAVSNLLALALLAQAAG) traverse the membrane as a helical segment. Residues 63–72 (RLRRRRSAAT) lie on the Cytoplasmic side of the membrane. Residues 73-96 (FLLFVASLLATDLAGHVIPGALVL) traverse the membrane as a helical segment. Topologically, residues 97–111 (RLYTAGRAPAGGACH) are extracellular. C110 and C188 form a disulfide bridge. The helical transmembrane segment at 112 to 133 (FLGGCMVFFGLCPLLLGCGMAV) threads the bilayer. Topologically, residues 134–155 (ERCVGVTRPLLHAARVSVARAR) are cytoplasmic. Residues 156–177 (LALAAVAAVALAVALLPLARVG) traverse the membrane as a helical segment. At 178–201 (RYELQYPGTWCFIGLGPPGGWRQA) the chain is on the extracellular side. Residues 202-227 (LLAGLFASLGLVALLAALVCNTLSGL) form a helical membrane-spanning segment. The Cytoplasmic segment spans residues 228 to 294 (ALLRARWRRR…ARRARAHDVE (67 aa)). A disordered region spans residues 238-266 (SRRPPPASGPDSRRRWGAHGPRSASASSA). A helical transmembrane segment spans residues 295-321 (MVGQLVGIMVVSCICWSPMLVLVALAV). Residues 322–332 (GGWSSTSLQRP) are Extracellular-facing. The chain crosses the membrane as a helical span at residues 333–354 (LFLAVRLASWNQILDPWVYILL). The Cytoplasmic segment spans residues 355 to 402 (RQAVLRQLLRLLPPRAGAKGGPAGLGLTPSAWEASSLRSSRHSGLSHF).

It belongs to the G-protein coupled receptor 1 family. Phosphorylated. As to expression, abundant in kidney. Lower level expression in lung, skeletal muscle and spleen, lowest expression in testis and not detected in liver brain and heart.

It localises to the cell membrane. In terms of biological role, receptor for prostaglandin E2 (PGE2). The activity of this receptor is mediated by G(q) proteins which activate a phosphatidylinositol-calcium second messenger system. May play a role as an important modulator of renal function. Implicated the smooth muscle contractile response to PGE2 in various tissues. The sequence is that of Prostaglandin E2 receptor EP1 subtype (PTGER1) from Homo sapiens (Human).